The primary structure comprises 219 residues: FMN-dependent NADH:quinone oxidoreductase 2 (219 aa).

FMN contacts are provided by residues Ser-10 and 23–25; that span reads SIS.

This sequence belongs to the azoreductase type 1 family. In terms of assembly, homodimer. Requires FMN as cofactor.

The enzyme catalyses 2 a quinone + NADH + H(+) = 2 a 1,4-benzosemiquinone + NAD(+). It carries out the reaction N,N-dimethyl-1,4-phenylenediamine + anthranilate + 2 NAD(+) = 2-(4-dimethylaminophenyl)diazenylbenzoate + 2 NADH + 2 H(+). Its function is as follows. Quinone reductase that provides resistance to thiol-specific stress caused by electrophilic quinones. Functionally, also exhibits azoreductase activity. Catalyzes the reductive cleavage of the azo bond in aromatic azo compounds to the corresponding amines. The sequence is that of FMN-dependent NADH:quinone oxidoreductase 2 from Colwellia psychrerythraea (strain 34H / ATCC BAA-681) (Vibrio psychroerythus).